The chain runs to 410 residues: WD repeat and FYVE domain-containing protein 1 (410 aa).

WD repeat units lie at residues 22–61, 66–105, 112–150, 153–192, 197–236, and 240–279; these read GHQD…QYWP, TMAS…NKMN, AHQN…NMLG, FFSS…CSVI, GHEG…GRTL, and GHHD…EEAP. Residues 281–352 form an FYVE-type zinc finger; it reads WLESDSCQKC…VCDSCYDSIK (72 aa). The Zn(2+) site is built by C287, C290, C314, C317, C322, C325, C344, and C347. One copy of the WD 7 repeat lies at 364-403; the sequence is EGKHNISHMSMDIARGLMVTCGTDRVVKIWDMTPVVGCSL. At S408 the chain carries Phosphoserine.

As to quaternary structure, binds PtdIns3P in vitro with high specificity over other phosphoinositides. Interacts (via WD repeat 2) with tyrosine-phosphorylated TLR3 (via TIR domain) in response to poly(I:C). Interacts with TLR4 in response to LPS. Interacts with TICAM1 in response to poly(I:C).

The protein resides in the early endosome. Its function is as follows. Positively regulates TLR3- and TLR4-mediated signaling pathways by bridging the interaction between TLR3 or TLR4 and TICAM1. Promotes TLR3/4 ligand-induced activation of transcription factors IRF3 and NF-kappa-B, as well as the production of IFN-beta and inflammatory cytokines. The protein is WD repeat and FYVE domain-containing protein 1 (Wdfy1) of Mus musculus (Mouse).